The following is a 411-amino-acid chain: Lissencephaly-1 homolog (411 aa).

The 33-residue stretch at 9 to 41 folds into the LisH domain; that stretch reads QREELNQAIADYLGSNGYSSALEAFRKEADISG. The stretch at 56 to 83 forms a coiled coil; it reads TSVIRLQKKVMELEAKLSEAEKEVIEGA. WD repeat units follow at residues 106 to 147, 149 to 187, 191 to 230, 233 to 272, 275 to 334, 337 to 376, and 379 to 411; these read GHRA…RSLK, HTSSVQDIAFDSQGKLLASCSADLSIKLWDFQQSYDCVK, GHDHNVSSVAFVPAGDYVLSASRDQTIKMWEVATGYCVKT, GHREWIRMVRVHMDGNIFASCSIDHSIRIWSINSRDCKAE, AHDH…CLFV, GHDNWVRELTFHPGGKYLVSASDDKTIRVWDLRNKRFMKT, and AHQHFCTSVDFHKKLPYVISGSVDNTVKVWECR.

Belongs to the WD repeat LIS1/nudF family.

The protein resides in the cytoplasm. Its subcellular location is the cytoskeleton. It localises to the microtubule organizing center. The protein localises to the centrosome. Its function is as follows. Positively regulates the activity of the minus-end directed microtubule motor protein dynein. May enhance dynein-mediated microtubule sliding by targeting dynein to the microtubule plus end. Required for several dynein- and microtubule-dependent processes. The sequence is that of Lissencephaly-1 homolog from Glossina morsitans morsitans (Savannah tsetse fly).